The primary structure comprises 444 residues: ATP-dependent protease ATPase subunit HslU (444 aa).

ATP is bound by residues valine 18, 60–65 (GVGKTE), aspartate 258, glutamate 323, and arginine 395.

The protein belongs to the ClpX chaperone family. HslU subfamily. As to quaternary structure, a double ring-shaped homohexamer of HslV is capped on each side by a ring-shaped HslU homohexamer. The assembly of the HslU/HslV complex is dependent on binding of ATP.

It is found in the cytoplasm. ATPase subunit of a proteasome-like degradation complex; this subunit has chaperone activity. The binding of ATP and its subsequent hydrolysis by HslU are essential for unfolding of protein substrates subsequently hydrolyzed by HslV. HslU recognizes the N-terminal part of its protein substrates and unfolds these before they are guided to HslV for hydrolysis. This Thioalkalivibrio sulfidiphilus (strain HL-EbGR7) protein is ATP-dependent protease ATPase subunit HslU.